The sequence spans 249 residues: 1-(5-phosphoribosyl)-5-[(5-phosphoribosylamino)methylideneamino] imidazole-4-carboxamide isomerase (249 aa).

D8 functions as the Proton acceptor in the catalytic mechanism. Residue D129 is the Proton donor of the active site.

This sequence belongs to the HisA/HisF family.

It localises to the cytoplasm. It carries out the reaction 1-(5-phospho-beta-D-ribosyl)-5-[(5-phospho-beta-D-ribosylamino)methylideneamino]imidazole-4-carboxamide = 5-[(5-phospho-1-deoxy-D-ribulos-1-ylimino)methylamino]-1-(5-phospho-beta-D-ribosyl)imidazole-4-carboxamide. The protein operates within amino-acid biosynthesis; L-histidine biosynthesis; L-histidine from 5-phospho-alpha-D-ribose 1-diphosphate: step 4/9. The sequence is that of 1-(5-phosphoribosyl)-5-[(5-phosphoribosylamino)methylideneamino] imidazole-4-carboxamide isomerase from Nitratidesulfovibrio vulgaris (strain ATCC 29579 / DSM 644 / CCUG 34227 / NCIMB 8303 / VKM B-1760 / Hildenborough) (Desulfovibrio vulgaris).